Consider the following 63-residue polypeptide: Small integral membrane protein 43 (63 aa).

Important for interaction with SLC2A1 and SLC2A3 stretches follow at residues leucine 7–isoleucine 29 and histidine 51–phenylalanine 57. Residues leucine 9–isoleucine 29 traverse the membrane as a helical segment.

In terms of assembly, interacts with glucose transporters SLC2A1/GLUT1 and SLC2A3/GLUT3; the interactions may promote SLC2A1- and SLC2A3-mediated glucose transport to meet the energy needs of mesendoderm differentiation.

Its subcellular location is the cell membrane. Required for mesendoderm differentiation. Interacts with glucose transporters and promotes glucose uptake. Probably augments the glucose uptake capacity of glucose transporter proteins to meet the energy needs of mesendoderm differentiation. In Homo sapiens (Human), this protein is Small integral membrane protein 43.